Consider the following 249-residue polypeptide: Probable septum site-determining protein MinC (249 aa).

The segment at 116-149 (AAVSPPPPPPPPPARAEPAAPVARPAPGRMQRNA) is disordered. Over residues 119-130 (SPPPPPPPPPAR) the composition is skewed to pro residues. The segment covering 131-142 (AEPAAPVARPAP) has biased composition (low complexity).

The protein belongs to the MinC family. Interacts with MinD and FtsZ.

Functionally, cell division inhibitor that blocks the formation of polar Z ring septums. Rapidly oscillates between the poles of the cell to destabilize FtsZ filaments that have formed before they mature into polar Z rings. Prevents FtsZ polymerization. This is Probable septum site-determining protein MinC from Xanthomonas campestris pv. campestris (strain ATCC 33913 / DSM 3586 / NCPPB 528 / LMG 568 / P 25).